The sequence spans 82 residues: Sulfur carrier protein TusA (82 aa).

The active-site Cysteine persulfide intermediate is cysteine 17.

Belongs to the sulfur carrier protein TusA family.

Its subcellular location is the cytoplasm. In terms of biological role, sulfur carrier protein which probably makes part of a sulfur-relay system. This is Sulfur carrier protein TusA from Glaesserella parasuis serovar 5 (strain SH0165) (Haemophilus parasuis).